The primary structure comprises 166 residues: Eukaryotic translation initiation factor 5A (166 aa).

Lys52 carries the hypusine modification. A disordered region spans residues 99–125; that stretch reads DREDPSKPAHLSLMDDEGETRDNLDMP.

It belongs to the eIF-5A family. In terms of processing, lys-52 undergoes hypusination, a unique post-translational modification that consists in the addition of a butylamino group from spermidine to lysine side chain, leading to the formation of the unusual amino acid hypusine. eIF-5As are the only known proteins to undergo this modification, which is essential for their function. Hypusination is mediated by the consecutive action of deoxyhypusine synthase DHSc and deoxyhypusine hydroxylase DOHH.

It localises to the cytoplasm. Its function is as follows. Translation factor that promotes translation elongation and termination, particularly upon ribosome stalling at specific amino acid sequence contexts. Binds between the exit (E) and peptidyl (P) site of the ribosome and promotes rescue of stalled ribosome: specifically required for efficient translation of polyproline-containing peptides as well as other motifs that stall the ribosome. Acts as a ribosome quality control (RQC) cofactor by joining the RQC complex to facilitate peptidyl transfer during CAT tailing step. Required for cell growth during both bloodstream (BF) and insect procyclic (PF) life cycle stages and for survival of the bloodstream form. This chain is Eukaryotic translation initiation factor 5A, found in Trypanosoma brucei brucei (strain 927/4 GUTat10.1).